Here is a 195-residue protein sequence, read N- to C-terminus: uncharacterized protein (195 aa).

The N-terminal stretch at 1–17 (MKASLITAFVLPLLALA) is a signal peptide. N75 carries an N-linked (GlcNAc...) asparagine glycan.

Its subcellular location is the secreted. This is an uncharacterized protein from Arthroderma benhamiae (strain ATCC MYA-4681 / CBS 112371) (Trichophyton mentagrophytes).